A 695-amino-acid polypeptide reads, in one-letter code: NADPH--cytochrome P450 reductase (695 aa).

Residues methionine 1–aspartate 8 lie on the Lumenal side of the membrane. The chain crosses the membrane as a helical span at residues leucine 9 to valine 31. Topologically, residues alanine 32 to serine 695 are cytoplasmic. The 156-residue stretch at cysteine 66–tryptophan 221 folds into the Flavodoxin-like domain. Residues serine 72–alanine 77, alanine 123–glycine 126, leucine 169–asparagine 178, and aspartate 204 contribute to the FMN site. The 262-residue stretch at histidine 277–proline 538 folds into the FAD-binding FR-type domain. Arginine 296 lines the NADP(+) pocket. Residues arginine 451–serine 454, threonine 469–valine 471, and glycine 486–threonine 489 each bind FAD. Residues threonine 552, serine 614–arginine 615, lysine 620–glutamine 624, and glutamate 656 contribute to the NADP(+) site. Residue tryptophan 694 coordinates FAD.

This sequence belongs to the NADPH--cytochrome P450 reductase family. It in the N-terminal section; belongs to the flavodoxin family. The protein in the C-terminal section; belongs to the flavoprotein pyridine nucleotide cytochrome reductase family. FAD is required as a cofactor. Requires FMN as cofactor.

The protein resides in the endoplasmic reticulum membrane. The protein localises to the mitochondrion outer membrane. It localises to the cell membrane. The catalysed reaction is 2 oxidized [cytochrome P450] + NADPH = 2 reduced [cytochrome P450] + NADP(+) + H(+). In terms of biological role, this enzyme is required for electron transfer from NADP to cytochrome P450 in microsomes. It can also provide electron transfer to heme oxygenase and cytochrome B5. Involved in ergosterol biosynthesis. This is NADPH--cytochrome P450 reductase from Aspergillus niger (strain ATCC MYA-4892 / CBS 513.88 / FGSC A1513).